Here is a 437-residue protein sequence, read N- to C-terminus: Asparagine--tRNA ligase (437 aa).

The protein belongs to the class-II aminoacyl-tRNA synthetase family. In terms of assembly, homodimer.

The protein resides in the cytoplasm. The catalysed reaction is tRNA(Asn) + L-asparagine + ATP = L-asparaginyl-tRNA(Asn) + AMP + diphosphate + H(+). In Symbiobacterium thermophilum (strain DSM 24528 / JCM 14929 / IAM 14863 / T), this protein is Asparagine--tRNA ligase.